A 202-amino-acid chain; its full sequence is FMN-dependent NADH:quinone oxidoreductase 2 (202 aa).

FMN contacts are provided by residues Ser9, 15 to 17, and 95 to 98; these read SAS and MWNL.

It belongs to the azoreductase type 1 family. Homodimer. Requires FMN as cofactor.

The catalysed reaction is 2 a quinone + NADH + H(+) = 2 a 1,4-benzosemiquinone + NAD(+). It carries out the reaction N,N-dimethyl-1,4-phenylenediamine + anthranilate + 2 NAD(+) = 2-(4-dimethylaminophenyl)diazenylbenzoate + 2 NADH + 2 H(+). In terms of biological role, quinone reductase that provides resistance to thiol-specific stress caused by electrophilic quinones. Also exhibits azoreductase activity. Catalyzes the reductive cleavage of the azo bond in aromatic azo compounds to the corresponding amines. In Hahella chejuensis (strain KCTC 2396), this protein is FMN-dependent NADH:quinone oxidoreductase 2.